The primary structure comprises 765 residues: MKLKGFLAVGVSVFGFSGLLMACSVVSQFDQVDDGKIKLASSLTSKRAAEALETVVKKYNDTKDPGDYPIEIVQIAGGYDGGKKDVQTKVSTKDKNNFYNLILNYPEIVSTLSRSKMALNFDGVNVDKLHPNFLSFNSRIGGIRDDGIYAIPISMSTDLMVINGPVLHYILNSARKEGTPTSTTVQATVSSRSAEKKGTLEIANDSETTKLWQNIQTTAQNNSNETTKEQKQVKRSSSSSSTTSTTGETKDTTKSDNKIKEFWGEYQEVDGGLKNFTFKASIFENWNETLDFATRIANSFPEKVKNITNKTGLDLQGVLGVDSSSNALYAAVFAAGQANYDNFFFNIDKRTGYADYSNFLNKDSSYQNLESVYNDFYKLIQANGLFVNRGGSYSSNFEKFHQLAFSVSSSGGYSYYFAKDNAKRLKFSNYAIEYPSFTQTIQAPNSSETESNLLGTFKLSEKDINLYKGSIPSGKQQGVDAILISNPNLINILEQAKQKNTAQGSESTTNKIIGYTTTANVNVDNQNIFSVSKLNNEQFQRKIIVNATEETLDQSQTLQSNESIVLPMPGKYKSTDKNKVMITQGPNLIGIHANEKENIETKKFVNWFLNQSITDWNSNNQQKNSDQTTKTAAEYFTDQASYILPLKEKFNKSSDLELKGSSSSSNLTTSSASASLLISNNSSTASSPAPKKTNNNSNTFTAKALELFQQAANNEIIPFSDPSDFRNGTFRNNISSSFNAAVNSKVSFNQFVQNFINSLGSGFRR.

The signal sequence occupies residues 1-22; sequence MKLKGFLAVGVSVFGFSGLLMA. Cys-23 carries N-palmitoyl cysteine lipidation. A lipid anchor (S-diacylglycerol cysteine) is attached at Cys-23. Disordered regions lie at residues 177 to 203 and 218 to 255; these read EGTP…LEIA and TAQN…TTKS. Over residues 179–192 the composition is skewed to polar residues; that stretch reads TPTSTTVQATVSSR. Low complexity predominate over residues 236-247; the sequence is SSSSSSTTSTTG.

The protein belongs to the MG185/MG260 family.

Its subcellular location is the cell membrane. This is an uncharacterized protein from Mycoplasma genitalium (strain ATCC 33530 / DSM 19775 / NCTC 10195 / G37) (Mycoplasmoides genitalium).